Consider the following 481-residue polypeptide: Surface lipoprotein assembly modifier 1 (481 aa).

Residues 1 to 23 form the signal peptide; that stretch reads MSIQTKFILFLSSSLFLTPYSVA. The tract at residues 25–192 is N-terminal domain; the sequence is EKSPQPHDGR…QYLSALNQRD (168 aa). Residues 193–481 are C-terminal probable beta barrel; it reads QWKIQGGFSF…RIYVEISKTF (289 aa). 14 beta stranded membrane passes run 194–204, 233–243, 248–258, 271–281, 285–295, 315–325, 329–338, 353–363, 368–377, 390–400, 405–414, 432–441, 448–458, and 471–481; these read WKIQGGFSFLN, SYFGNAEKKWS, HFTKLSLEGSG, NARAGVGLGYQ, FELSLMPFTEK, SGARLDLSNWL, WQISTALEYG, YLASATLLYLA, YWFGGADYNR, KNVRLGWGQEW, STRLILNYAR, YASVLTIWHR, ITPKLSWSYQK, and NRIYVEISKTF.

This sequence belongs to the Slam family.

The protein resides in the cell outer membrane. In terms of biological role, required for correct export to the cell surface of some cell outer membrane lipoproteins. The protein is Surface lipoprotein assembly modifier 1 of Haemophilus influenzae (strain ATCC 51907 / DSM 11121 / KW20 / Rd).